The primary structure comprises 460 residues: Probable elastin-binding protein EbpS (460 aa).

The span at 1–40 (MSNNNFKDDFEKNRQSINPDEHQTELKEDDKTNENKKEAD) shows a compositional bias: basic and acidic residues. Residues 1 to 277 (MSNNNFKDDF…NQYNDQSEGK (277 aa)) are disordered. Over residues 41–57 (SQNSLSNNSNQQFPPRN) the composition is skewed to low complexity. Residues 74–128 (QQDDKHQKNSDAKTTEGSLDDRYDEAQLQQQHDKSQQQNKTEKQSQDNRMKDGKD) show a composition bias toward basic and acidic residues. Low complexity predominate over residues 177-192 (ATGAGIAGAAGVAGAA). The segment covering 203–226 (DKQDSKHSNHENDEKSVKNDDQKQ) has biased composition (basic and acidic residues). Residues 264–273 (SNQNNQYNDQ) are compositionally biased toward low complexity. The chain crosses the membrane as a helical span at residues 285–305 (ILLPLIAAILILGAIAIFGGM). Over residues 313–359 (SKSDDQKIANQSKKDSDKKDGAQSEDNKDKKSDSNKDKKSDSDKNAD) the composition is skewed to basic and acidic residues. The interval 313–411 (SKSDDQKIAN…NQQATQGQQS (99 aa)) is disordered. The segment covering 364 to 411 (NSSSNPNATSTNNNDNVANNNSNYTNQNQQDNANQNSNNQQATQGQQS) has biased composition (low complexity). In terms of domain architecture, LysM spans 410–458 (QSHTVYGQENLYRIAIQYYGEGTQANVDKIKRANGLSSNNIHNGQTLVI).

The protein resides in the cell membrane. The protein is Probable elastin-binding protein EbpS (ebpS) of Staphylococcus epidermidis (strain ATCC 35984 / DSM 28319 / BCRC 17069 / CCUG 31568 / BM 3577 / RP62A).